We begin with the raw amino-acid sequence, 278 residues long: Multidrug-efflux transporter 1 regulator (278 aa).

One can recognise an HTH merR-type domain in the interval 5–75; the sequence is YYSIGEVSKL…LEEMKKAQDL (71 aa). A DNA-binding region (H-T-H motif) is located at residues 8–27; that stretch reads IGEVSKLANVSIKALRYYDK.

Binds DNA as a homodimer.

Activates transcription of the bmr gene in response to structurally dissimilar drugs. Binds rhodamine as an inducer. The sequence is that of Multidrug-efflux transporter 1 regulator (bmrR) from Bacillus subtilis (strain 168).